The chain runs to 264 residues: Thymidylate synthase (264 aa).

Arg21 provides a ligand contact to dUMP. (6R)-5,10-methylene-5,6,7,8-tetrahydrofolate is bound at residue His51. 126-127 (RR) serves as a coordination point for dUMP. Cys146 (nucleophile) is an active-site residue. Residues 166 to 169 (RSAD), Asn177, and 207 to 209 (HIY) contribute to the dUMP site. Asp169 contacts (6R)-5,10-methylene-5,6,7,8-tetrahydrofolate. Residue Ala263 coordinates (6R)-5,10-methylene-5,6,7,8-tetrahydrofolate.

The protein belongs to the thymidylate synthase family. Bacterial-type ThyA subfamily. In terms of assembly, homodimer.

It is found in the cytoplasm. The enzyme catalyses dUMP + (6R)-5,10-methylene-5,6,7,8-tetrahydrofolate = 7,8-dihydrofolate + dTMP. Its pathway is pyrimidine metabolism; dTTP biosynthesis. Catalyzes the reductive methylation of 2'-deoxyuridine-5'-monophosphate (dUMP) to 2'-deoxythymidine-5'-monophosphate (dTMP) while utilizing 5,10-methylenetetrahydrofolate (mTHF) as the methyl donor and reductant in the reaction, yielding dihydrofolate (DHF) as a by-product. This enzymatic reaction provides an intracellular de novo source of dTMP, an essential precursor for DNA biosynthesis. This Coxiella burnetii (strain Dugway 5J108-111) protein is Thymidylate synthase.